The sequence spans 569 residues: Proline--tRNA ligase (569 aa).

This sequence belongs to the class-II aminoacyl-tRNA synthetase family. ProS type 1 subfamily. Homodimer.

It localises to the cytoplasm. It catalyses the reaction tRNA(Pro) + L-proline + ATP = L-prolyl-tRNA(Pro) + AMP + diphosphate. Catalyzes the attachment of proline to tRNA(Pro) in a two-step reaction: proline is first activated by ATP to form Pro-AMP and then transferred to the acceptor end of tRNA(Pro). As ProRS can inadvertently accommodate and process non-cognate amino acids such as alanine and cysteine, to avoid such errors it has two additional distinct editing activities against alanine. One activity is designated as 'pretransfer' editing and involves the tRNA(Pro)-independent hydrolysis of activated Ala-AMP. The other activity is designated 'posttransfer' editing and involves deacylation of mischarged Ala-tRNA(Pro). The misacylated Cys-tRNA(Pro) is not edited by ProRS. This Endomicrobium trichonymphae protein is Proline--tRNA ligase.